A 78-amino-acid polypeptide reads, in one-letter code: Exodeoxyribonuclease 7 small subunit (78 aa).

The protein belongs to the XseB family. In terms of assembly, heterooligomer composed of large and small subunits.

It localises to the cytoplasm. It catalyses the reaction Exonucleolytic cleavage in either 5'- to 3'- or 3'- to 5'-direction to yield nucleoside 5'-phosphates.. In terms of biological role, bidirectionally degrades single-stranded DNA into large acid-insoluble oligonucleotides, which are then degraded further into small acid-soluble oligonucleotides. This is Exodeoxyribonuclease 7 small subunit from Actinobacillus succinogenes (strain ATCC 55618 / DSM 22257 / CCUG 43843 / 130Z).